A 318-amino-acid polypeptide reads, in one-letter code: tRNA-dihydrouridine(16) synthase (318 aa).

FMN-binding positions include 7-9 (PME) and Gln68. Residue Cys98 is the Proton donor of the active site. FMN-binding positions include Lys139, 200-202 (NGE), and 224-225 (CR).

Belongs to the Dus family. DusC subfamily. FMN serves as cofactor.

It catalyses the reaction 5,6-dihydrouridine(16) in tRNA + NADP(+) = uridine(16) in tRNA + NADPH + H(+). It carries out the reaction 5,6-dihydrouridine(16) in tRNA + NAD(+) = uridine(16) in tRNA + NADH + H(+). Catalyzes the synthesis of 5,6-dihydrouridine (D), a modified base found in the D-loop of most tRNAs, via the reduction of the C5-C6 double bond in target uridines. Specifically modifies U16 in tRNAs. The polypeptide is tRNA-dihydrouridine(16) synthase (Vibrio vulnificus (strain CMCP6)).